We begin with the raw amino-acid sequence, 138 residues long: MLTPFNNFFQQRQNYHSSVIDHFENPRNVGSYDKSANDVGTGLVGAPACGDVMKLQIKVENDIIKDAKFRTFGCGSAIASSSLATEWIKGKSISDSLKITNKDIAKKLSLPPVKLHCSMLAEDAIKAAISDYQKKNGL.

The protein belongs to the NifU family. In terms of assembly, component of the core Fe-S cluster (ISC) assembly machinery. It depends on [2Fe-2S] cluster as a cofactor.

It localises to the cytoplasm. The protein operates within cofactor biosynthesis; iron-sulfur cluster biosynthesis. Scaffold protein for the de novo synthesis of iron-sulfur (Fe-S) clusters within mitosomes, which is required for maturation of both [2Fe-2S] and [4Fe-4S] proteins. First, a [2Fe-2S] cluster is transiently assembled on the scaffold protein ISU1. In a second step, the cluster is released from ISU1, transferred to a glutaredoxin, followed by the formation of [2Fe-2S] proteins, the synthesis of [4Fe-4S] clusters and their target-specific insertion into the recipient apoproteins. Cluster assembly on ISU1 depends on the function of the cysteine desulfurase complex NFS1-ISD11, which serves as the sulfur donor for cluster synthesis, the iron-binding protein frataxin as the putative iron donor, and the electron transfer chain comprised of ferredoxin reductase and ferredoxin, which receive their electrons from NADH. The chain is Iron sulfur cluster assembly protein 1 (ISU1) from Trachipleistophora hominis (Microsporidian parasite).